The chain runs to 346 residues: MGKIHRPRRGSLAYSPRKRAKSIVPRIRSWPKDSEVRMLGFAGYKAGMTHILMIDDSPGLTKGKEIFVPVTIVEVPPLFVYGIRAYKQGYLGLETATEVWFHDLHKNVARRIKTLPKNYNEEAFQAKLGQLEDLVNDGEIADVRLLVHTQPWLIGLKKKPEVMEYAIGGDDVKAKFDYAKEKIGKELRAGEVLHEGELLDVIAVTKGKGTQGPVKRWGVKVQFHKAQRAGKGRHIGNLGPWHPARVMWTVPQAGQMGFHHRTEFNKRLIAIGENGKLVLDGNEIEITPKGGFPHYGIVRSDFLMIEGTIPGSFKRIIRVRPAIRPPKKKPPVERPQITYVSRESKQ.

Positions 324 to 346 (RPPKKKPPVERPQITYVSRESKQ) are disordered.

It belongs to the universal ribosomal protein uL3 family. In terms of assembly, part of the 50S ribosomal subunit. Forms a cluster with proteins L14 and L24e.

One of the primary rRNA binding proteins, it binds directly near the 3'-end of the 23S rRNA, where it nucleates assembly of the 50S subunit. The sequence is that of Large ribosomal subunit protein uL3 from Thermococcus kodakarensis (strain ATCC BAA-918 / JCM 12380 / KOD1) (Pyrococcus kodakaraensis (strain KOD1)).